A 612-amino-acid polypeptide reads, in one-letter code: RNA-binding protein MRN1 (612 aa).

Positions 1–28 are enriched in low complexity; it reads MVVSYNNNNNNNNNNNNNNISNNNNNNN. Disordered regions lie at residues 1-57 and 105-125; these read MVVS…TYAS and PTQF…SQEQ. 2 stretches are compositionally biased toward polar residues: residues 42–57 and 115–125; these read YQQS…TYAS and DSQQQRFSQEQ. RRM domains are found at residues 201-274, 292-379, 431-504, and 522-602; these read RTVY…WGKP, RNVY…KTQQ, RTVY…WGKH, and RNVY…FGKD.

It localises to the cytoplasm. In terms of biological role, RNA-binding protein that binds specific categories of mRNAs, including those that contain upstream open reading frames (uORFs) and internal ribosome entry sites (IRES). Probably involved in translational regulation. The protein is RNA-binding protein MRN1 (MRN1) of Saccharomyces cerevisiae (strain ATCC 204508 / S288c) (Baker's yeast).